We begin with the raw amino-acid sequence, 212 residues long: Large ribosomal subunit protein uL4 (212 aa).

Belongs to the universal ribosomal protein uL4 family. Part of the 50S ribosomal subunit.

In terms of biological role, one of the primary rRNA binding proteins, this protein initially binds near the 5'-end of the 23S rRNA. It is important during the early stages of 50S assembly. It makes multiple contacts with different domains of the 23S rRNA in the assembled 50S subunit and ribosome. Functionally, forms part of the polypeptide exit tunnel. This chain is Large ribosomal subunit protein uL4, found in Caulobacter vibrioides (strain ATCC 19089 / CIP 103742 / CB 15) (Caulobacter crescentus).